Here is a 156-residue protein sequence, read N- to C-terminus: ATP synthase subunit b (156 aa).

The helical transmembrane segment at 7 to 27 threads the bilayer; it reads LFLQAVVFAILVWFTMKFVWP.

The protein belongs to the ATPase B chain family. As to quaternary structure, F-type ATPases have 2 components, F(1) - the catalytic core - and F(0) - the membrane proton channel. F(1) has five subunits: alpha(3), beta(3), gamma(1), delta(1), epsilon(1). F(0) has three main subunits: a(1), b(2) and c(10-14). The alpha and beta chains form an alternating ring which encloses part of the gamma chain. F(1) is attached to F(0) by a central stalk formed by the gamma and epsilon chains, while a peripheral stalk is formed by the delta and b chains.

Its subcellular location is the cell inner membrane. Its function is as follows. F(1)F(0) ATP synthase produces ATP from ADP in the presence of a proton or sodium gradient. F-type ATPases consist of two structural domains, F(1) containing the extramembraneous catalytic core and F(0) containing the membrane proton channel, linked together by a central stalk and a peripheral stalk. During catalysis, ATP synthesis in the catalytic domain of F(1) is coupled via a rotary mechanism of the central stalk subunits to proton translocation. In terms of biological role, component of the F(0) channel, it forms part of the peripheral stalk, linking F(1) to F(0). The polypeptide is ATP synthase subunit b (Polaromonas naphthalenivorans (strain CJ2)).